A 319-amino-acid chain; its full sequence is ATP-dependent 6-phosphofructokinase (319 aa).

ATP is bound at residue Gly-11. Residue 21 to 25 (RAVVR) coordinates ADP. ATP is bound by residues 72-73 (RC) and 102-105 (GNGS). Asn-103 contacts Mg(2+). 125-127 (TID) contributes to the substrate binding site. Asp-127 (proton acceptor) is an active-site residue. Arg-154 is a binding site for ADP. Substrate contacts are provided by residues Arg-162 and 169-171 (MGR). ADP contacts are provided by residues 185 to 187 (GAE), Arg-211, and 213 to 215 (KMH). Residues Glu-222, Arg-243, and 249 to 252 (HIQR) contribute to the substrate site.

The protein belongs to the phosphofructokinase type A (PFKA) family. ATP-dependent PFK group I subfamily. Prokaryotic clade 'B1' sub-subfamily. In terms of assembly, homotetramer. Mg(2+) serves as cofactor.

It is found in the cytoplasm. It catalyses the reaction beta-D-fructose 6-phosphate + ATP = beta-D-fructose 1,6-bisphosphate + ADP + H(+). It participates in carbohydrate degradation; glycolysis; D-glyceraldehyde 3-phosphate and glycerone phosphate from D-glucose: step 3/4. Its activity is regulated as follows. Allosterically activated by ADP and other diphosphonucleosides, and allosterically inhibited by phosphoenolpyruvate. In terms of biological role, catalyzes the phosphorylation of D-fructose 6-phosphate to fructose 1,6-bisphosphate by ATP, the first committing step of glycolysis. The protein is ATP-dependent 6-phosphofructokinase of Clostridium acetobutylicum (strain ATCC 824 / DSM 792 / JCM 1419 / IAM 19013 / LMG 5710 / NBRC 13948 / NRRL B-527 / VKM B-1787 / 2291 / W).